Reading from the N-terminus, the 155-residue chain is SsrA-binding protein (155 aa).

The protein belongs to the SmpB family.

The protein localises to the cytoplasm. Functionally, required for rescue of stalled ribosomes mediated by trans-translation. Binds to transfer-messenger RNA (tmRNA), required for stable association of tmRNA with ribosomes. tmRNA and SmpB together mimic tRNA shape, replacing the anticodon stem-loop with SmpB. tmRNA is encoded by the ssrA gene; the 2 termini fold to resemble tRNA(Ala) and it encodes a 'tag peptide', a short internal open reading frame. During trans-translation Ala-aminoacylated tmRNA acts like a tRNA, entering the A-site of stalled ribosomes, displacing the stalled mRNA. The ribosome then switches to translate the ORF on the tmRNA; the nascent peptide is terminated with the 'tag peptide' encoded by the tmRNA and targeted for degradation. The ribosome is freed to recommence translation, which seems to be the essential function of trans-translation. This Streptococcus sanguinis (strain SK36) protein is SsrA-binding protein.